Consider the following 307-residue polypeptide: Pyridoxal 5'-phosphate synthase subunit PdxS (307 aa).

Over residues 1–10 the composition is skewed to basic residues; sequence MRGQPRPKLR. Positions 1–20 are disordered; the sequence is MRGQPRPKLRRMTEQQTGTP. Aspartate 37 contributes to the D-ribose 5-phosphate binding site. The active-site Schiff-base intermediate with D-ribose 5-phosphate is lysine 94. Glycine 166 is a binding site for D-ribose 5-phosphate. Arginine 178 contributes to the D-glyceraldehyde 3-phosphate binding site. D-ribose 5-phosphate contacts are provided by residues glycine 227 and 248-249; that span reads GS.

It belongs to the PdxS/SNZ family. In the presence of PdxT, forms a dodecamer of heterodimers.

It carries out the reaction aldehydo-D-ribose 5-phosphate + D-glyceraldehyde 3-phosphate + L-glutamine = pyridoxal 5'-phosphate + L-glutamate + phosphate + 3 H2O + H(+). It functions in the pathway cofactor biosynthesis; pyridoxal 5'-phosphate biosynthesis. Functionally, catalyzes the formation of pyridoxal 5'-phosphate from ribose 5-phosphate (RBP), glyceraldehyde 3-phosphate (G3P) and ammonia. The ammonia is provided by the PdxT subunit. Can also use ribulose 5-phosphate and dihydroxyacetone phosphate as substrates, resulting from enzyme-catalyzed isomerization of RBP and G3P, respectively. This Deinococcus radiodurans (strain ATCC 13939 / DSM 20539 / JCM 16871 / CCUG 27074 / LMG 4051 / NBRC 15346 / NCIMB 9279 / VKM B-1422 / R1) protein is Pyridoxal 5'-phosphate synthase subunit PdxS.